The sequence spans 971 residues: uncharacterized protein (971 aa).

This is an uncharacterized protein from Caenorhabditis elegans.